A 590-amino-acid chain; its full sequence is Protein Spindly (590 aa).

Positions M1–E401 form a coiled coil. The disordered stretch occupies residues N446 to Q590. 2 stretches are compositionally biased toward basic and acidic residues: residues S483–E497 and R518–E527. Polar residues-rich tracts occupy residues V541–Q554 and Q572–Q590.

It belongs to the Spindly family.

The protein localises to the chromosome. It is found in the centromere. The protein resides in the kinetochore. In terms of biological role, required for the localization of dynein and dynactin to the mitotic kintochore. Dynein is believed to control the initial lateral interaction between the kinetochore and spindle microtubules and to facilitate the subsequent formation of end-on kinetochore-microtubule attachments mediated by the NDC80 complex. May act as an adapter protein linking the dynein motor complex to various cargos. This Danio rerio (Zebrafish) protein is Protein Spindly (spdl1).